The chain runs to 426 residues: UDP-N-acetylglucosamine 1-carboxyvinyltransferase (426 aa).

24–25 (KN) is a binding site for phosphoenolpyruvate. Residue Arg-95 participates in UDP-N-acetyl-alpha-D-glucosamine binding. Cys-119 functions as the Proton donor in the catalytic mechanism. Cys-119 bears the 2-(S-cysteinyl)pyruvic acid O-phosphothioketal mark. UDP-N-acetyl-alpha-D-glucosamine-binding positions include 124 to 128 (RPVDQ), Asp-308, and Val-330.

It belongs to the EPSP synthase family. MurA subfamily.

It is found in the cytoplasm. It catalyses the reaction phosphoenolpyruvate + UDP-N-acetyl-alpha-D-glucosamine = UDP-N-acetyl-3-O-(1-carboxyvinyl)-alpha-D-glucosamine + phosphate. It participates in cell wall biogenesis; peptidoglycan biosynthesis. Cell wall formation. Adds enolpyruvyl to UDP-N-acetylglucosamine. The polypeptide is UDP-N-acetylglucosamine 1-carboxyvinyltransferase (Deinococcus radiodurans (strain ATCC 13939 / DSM 20539 / JCM 16871 / CCUG 27074 / LMG 4051 / NBRC 15346 / NCIMB 9279 / VKM B-1422 / R1)).